Here is a 186-residue protein sequence, read N- to C-terminus: Pyridoxal 5'-phosphate synthase subunit PdxT (186 aa).

Gly46 to Ser48 is a binding site for L-glutamine. The active-site Nucleophile is the Cys75. Residues Arg101 and Ile127–Arg128 contribute to the L-glutamine site. Catalysis depends on charge relay system residues His164 and Glu166.

Belongs to the glutaminase PdxT/SNO family. In terms of assembly, in the presence of PdxS, forms a dodecamer of heterodimers. Only shows activity in the heterodimer.

It catalyses the reaction aldehydo-D-ribose 5-phosphate + D-glyceraldehyde 3-phosphate + L-glutamine = pyridoxal 5'-phosphate + L-glutamate + phosphate + 3 H2O + H(+). The enzyme catalyses L-glutamine + H2O = L-glutamate + NH4(+). The protein operates within cofactor biosynthesis; pyridoxal 5'-phosphate biosynthesis. Catalyzes the hydrolysis of glutamine to glutamate and ammonia as part of the biosynthesis of pyridoxal 5'-phosphate. The resulting ammonia molecule is channeled to the active site of PdxS. The sequence is that of Pyridoxal 5'-phosphate synthase subunit PdxT from Methanococcus aeolicus (strain ATCC BAA-1280 / DSM 17508 / OCM 812 / Nankai-3).